The chain runs to 331 residues: MKGYVVAIFLSSIFLYYVLYCILWGTNGYWFPNEEMKSKNNVKNCFKKPAFASLLRFPQFYPFLCKADFVKVAATYGTNNFLLPYGVKTFESYFRSGLSKLQSCDLVGQFDTVPCKRCVVVGNGGVLKNKTLGAKIDSYDVIIRMNNGPVLGHEEEVGKRTTFRLFYPESVFSDPSHYDPNTTAVLVVFKPQDLRWLMEILIGKKINTDGFWKKPALKLIYKQYQIRILDPYIIREAAFQLLRFPRVFPKDQKPKHPTTGIIALTLAFHICSEVHLAGFKYNFYTPDSPLHYYGNATMSLMKKNAYHNLTAEQLFLKNLIKKKMVINLTQN.

Residues 1 to 4 (MKGY) lie on the Cytoplasmic side of the membrane. The chain crosses the membrane as a helical; Signal-anchor for type II membrane protein span at residues 5-25 (VVAIFLSSIFLYYVLYCILWG). Over 26-331 (TNGYWFPNEE…KKMVINLTQN (306 aa)) the chain is Lumenal. N-linked (GlcNAc...) asparagine glycosylation is found at N129, N181, N295, N308, and N327.

Belongs to the glycosyltransferase 29 family.

It localises to the golgi apparatus membrane. The enzyme catalyses a neolactoside nLc4Cer(d18:1(4E)) + CMP-N-acetyl-beta-neuraminate = a neolactoside IV(3)-alpha-NeuAc-nLc4Cer(d18:1(4E)) + CMP + H(+). It catalyses the reaction a beta-D-galactosyl-(1-&gt;4)-N-acetyl-beta-D-glucosaminyl derivative + CMP-N-acetyl-beta-neuraminate = an N-acetyl-alpha-neuraminyl-(2-&gt;3)-beta-D-galactosyl-(1-&gt;4)-N-acetyl-beta-D-glucosaminyl derivative + CMP + H(+). It carries out the reaction a neolactoside nLc6Cer(d18:1(4E)) + CMP-N-acetyl-beta-neuraminate = a neolactoside VI(3)-alpha-NeuNAc-nLc6Cer(d18:1(4E)) + CMP + H(+). Its function is as follows. Transfers the sialyl residue from CMP-N-acetyl-beta-neuraminate to the terminal galactose residue on sugar chains of glycoproteins and glycolipids. It's alpha-2,3-sialyltransferase activity is specific toward type II glycan chains (Galbeta1-4GlcNAc) on glycoproteins and glycolipids such as neolactosides nLc4Cer and nLc6Cer, whose sialyl-products serve as precursors for the Lewis X antigen. Critically involved in the synthesis of functional selectin ligands needed for neutrophil recruitment during inflammation and lymphocyte homing to the lymph nodes. This is Type 2 lactosamine alpha-2,3-sialyltransferase (St3gal6) from Rattus norvegicus (Rat).